The sequence spans 333 residues: MKDTLTLLSRVSAHPDSRCWFLAWNPSGTLLASCGGDRTIRIWGKDGDNWVCKSVLGEGHQRTVRKVSWSPCGNYLASASFDATTCIWMKKKEEFECITTLEGHENEVKSVAWAPSGSLLATCSRDKSVWVWEVDEEEEYECVSVLNSHTQDVKHVVWHPNQELLASASYDDSVKLYREEEDDWVCCATLEGHTSTVWSLAFDQTGEQLATCSDDKTVRIWRQLGTGEQGSKSDPNWKCVCTLTGYHTRTVYDVNWNHLTGAIATACGDDAVRIFEEDPGSDPLQPTFSLTAHMPRAHTQDVNCVTWHPKEPNLLASCSDDGEMAFWRYQKPE.

7 WD repeats span residues His-14 to Lys-53, Gly-59 to Ile-98, Gly-103 to Cys-142, Ser-148 to Cys-187, Gly-192 to Ser-231, Tyr-246 to Gln-285, and Ala-297 to Glu-333.

The protein belongs to the WD repeat CIA1 family. In terms of assembly, component of the CIA complex.

Functionally, key component of the cytosolic iron-sulfur protein assembly (CIA) complex, a multiprotein complex that mediates the incorporation of iron-sulfur cluster into extramitochondrial Fe/S proteins. This chain is Probable cytosolic iron-sulfur protein assembly protein ciao1 (ciao1), found in Xenopus tropicalis (Western clawed frog).